Reading from the N-terminus, the 143-residue chain is Large ribosomal subunit protein uL11 (143 aa).

It belongs to the universal ribosomal protein uL11 family. In terms of assembly, part of the ribosomal stalk of the 50S ribosomal subunit. Interacts with L10 and the large rRNA to form the base of the stalk. L10 forms an elongated spine to which L12 dimers bind in a sequential fashion forming a multimeric L10(L12)X complex. One or more lysine residues are methylated.

Functionally, forms part of the ribosomal stalk which helps the ribosome interact with GTP-bound translation factors. The chain is Large ribosomal subunit protein uL11 from Albidiferax ferrireducens (strain ATCC BAA-621 / DSM 15236 / T118) (Rhodoferax ferrireducens).